We begin with the raw amino-acid sequence, 118 residues long: uncharacterized protein (118 aa).

It to S.pombe tam6.

It localises to the mitochondrion. This is an uncharacterized protein from Saccharomyces cerevisiae (strain ATCC 204508 / S288c) (Baker's yeast).